A 473-amino-acid polypeptide reads, in one-letter code: Ribulose bisphosphate carboxylase large chain (473 aa).

The propeptide occupies 1–2 (MS). Pro-3 carries the post-translational modification N-acetylproline. Lys-14 carries the post-translational modification N6,N6,N6-trimethyllysine. Substrate-binding residues include Asn-123 and Thr-173. Lys-175 functions as the Proton acceptor in the catalytic mechanism. Residue Lys-177 coordinates substrate. Residues Lys-201, Asp-203, and Glu-204 each coordinate Mg(2+). Lys-201 is modified (N6-carboxylysine). His-294 acts as the Proton acceptor in catalysis. Substrate-binding residues include Arg-295, His-327, and Ser-379.

The protein belongs to the RuBisCO large chain family. Type I subfamily. As to quaternary structure, heterohexadecamer of 8 large chains and 8 small chains; disulfide-linked. The disulfide link is formed within the large subunit homodimers. The cofactor is Mg(2+). In terms of processing, the disulfide bond which can form in the large chain dimeric partners within the hexadecamer appears to be associated with oxidative stress and protein turnover.

It is found in the plastid. It localises to the chloroplast. It carries out the reaction 2 (2R)-3-phosphoglycerate + 2 H(+) = D-ribulose 1,5-bisphosphate + CO2 + H2O. The enzyme catalyses D-ribulose 1,5-bisphosphate + O2 = 2-phosphoglycolate + (2R)-3-phosphoglycerate + 2 H(+). Its function is as follows. RuBisCO catalyzes two reactions: the carboxylation of D-ribulose 1,5-bisphosphate, the primary event in carbon dioxide fixation, as well as the oxidative fragmentation of the pentose substrate in the photorespiration process. Both reactions occur simultaneously and in competition at the same active site. This Monarda didyma (Scarlet bee-balm) protein is Ribulose bisphosphate carboxylase large chain.